The sequence spans 143 residues: Transcriptional regulator MraZ (143 aa).

2 consecutive SpoVT-AbrB domains span residues 5-47 (EYQH…PQEE) and 76-119 (ASEC…SKSE).

Belongs to the MraZ family. Forms oligomers.

Its subcellular location is the cytoplasm. The protein localises to the nucleoid. The polypeptide is Transcriptional regulator MraZ (Listeria welshimeri serovar 6b (strain ATCC 35897 / DSM 20650 / CCUG 15529 / CIP 8149 / NCTC 11857 / SLCC 5334 / V8)).